Here is a 505-residue protein sequence, read N- to C-terminus: tRNA-2-methylthio-N(6)-dimethylallyladenosine synthase (505 aa).

The MTTase N-terminal domain maps to 14–132; sequence RTYEVRTYGC…LPVLLERARV (119 aa). 6 residues coordinate [4Fe-4S] cluster: Cys-23, Cys-61, Cys-95, Cys-169, Cys-173, and Cys-176. Residues 155 to 386 enclose the Radical SAM core domain; sequence RESAYAAWVS…ALQEEISWDE (232 aa). The region spanning 388–456 is the TRAM domain; that stretch reads KKQVGRTLEL…PHHLLAEGAV (69 aa).

Belongs to the methylthiotransferase family. MiaB subfamily. As to quaternary structure, monomer. [4Fe-4S] cluster serves as cofactor.

The protein localises to the cytoplasm. The catalysed reaction is N(6)-dimethylallyladenosine(37) in tRNA + (sulfur carrier)-SH + AH2 + 2 S-adenosyl-L-methionine = 2-methylsulfanyl-N(6)-dimethylallyladenosine(37) in tRNA + (sulfur carrier)-H + 5'-deoxyadenosine + L-methionine + A + S-adenosyl-L-homocysteine + 2 H(+). In terms of biological role, catalyzes the methylthiolation of N6-(dimethylallyl)adenosine (i(6)A), leading to the formation of 2-methylthio-N6-(dimethylallyl)adenosine (ms(2)i(6)A) at position 37 in tRNAs that read codons beginning with uridine. The polypeptide is tRNA-2-methylthio-N(6)-dimethylallyladenosine synthase (Streptomyces coelicolor (strain ATCC BAA-471 / A3(2) / M145)).